We begin with the raw amino-acid sequence, 139 residues long: Holo-[acyl-carrier-protein] synthase (139 aa).

Mg(2+) is bound by residues D8 and E57.

This sequence belongs to the P-Pant transferase superfamily. AcpS family. Mg(2+) is required as a cofactor.

The protein resides in the cytoplasm. The enzyme catalyses apo-[ACP] + CoA = holo-[ACP] + adenosine 3',5'-bisphosphate + H(+). Functionally, transfers the 4'-phosphopantetheine moiety from coenzyme A to a Ser of acyl-carrier-protein. The sequence is that of Holo-[acyl-carrier-protein] synthase from Rhizobium meliloti (strain 1021) (Ensifer meliloti).